A 533-amino-acid chain; its full sequence is MKQIWQALKAHQQAVEHRGILDLFTDPRRAETFSTRLGDMLFDWSKTNIDHTARDLLIDLAGAAGVAEKREAMFSGEKINETEGRAVLHTALRNMDRPVQVDGVDVTPALRETHARMQAFVRDLRSGRFTGQGGPITDVVNIGIGGSDLGPAMACLALAPYADGPRCHFVSNVDGAHIHDTLQDLDPATTLVIVASKTFTTIETMTNAETAKRWMATRVSDPAAQFAAVSTAADRTAAFGIDASRVFGFEDWVGGRYSMWGPIGLALMIAIGPEAFDAFLAGGAEMDRHFREAPFAENLPVLLALVGLWHNQICGHATRAVLPYDQRLARLPAYLQQLEMESNGKRVAMDGHELTHHSGPIVWGEPGTNGQHAFYQLIHQGSRIVPCEFLVAREGHEPDLAHQHLLLVSNCLAQSEALLRGRSVEEARAVLAKKGLTGSELERQARHRVFPGNRPSTVLAYEKLTPATLGRIVALYEHRVFVEGVILGINSYDQWGVELGKELALALQPMLEGRAGTEGKDGSTAQLVAYLRS.

Glutamate 341 functions as the Proton donor in the catalytic mechanism. Residues histidine 372 and lysine 501 contribute to the active site.

This sequence belongs to the GPI family.

Its subcellular location is the cytoplasm. The catalysed reaction is alpha-D-glucose 6-phosphate = beta-D-fructose 6-phosphate. The protein operates within carbohydrate biosynthesis; gluconeogenesis. Its pathway is carbohydrate degradation; glycolysis; D-glyceraldehyde 3-phosphate and glycerone phosphate from D-glucose: step 2/4. Functionally, catalyzes the reversible isomerization of glucose-6-phosphate to fructose-6-phosphate. The protein is Glucose-6-phosphate isomerase of Cereibacter sphaeroides (strain ATCC 17029 / ATH 2.4.9) (Rhodobacter sphaeroides).